Reading from the N-terminus, the 188-residue chain is Small ribosomal subunit protein uS7 (188 aa).

It belongs to the universal ribosomal protein uS7 family. As to quaternary structure, part of the 30S ribosomal subunit.

In terms of biological role, one of the primary rRNA binding proteins, it binds directly to 16S rRNA where it nucleates assembly of the head domain of the 30S subunit. Is located at the subunit interface close to the decoding center. This is Small ribosomal subunit protein uS7 from Methanococcus aeolicus (strain ATCC BAA-1280 / DSM 17508 / OCM 812 / Nankai-3).